We begin with the raw amino-acid sequence, 23 residues long: Paralytic peptide 1 (23 aa).

Residues Cys-7 and Cys-19 are joined by a disulfide bond.

Belongs to the GBP/PSP1/paralytic peptide family. In terms of tissue distribution, hemolymph.

Causes rapid, rigid paralysis when injected into Lepidopteran larvae. The physiological role may be to reduce hemolymph loss following injury and promote wound healing. In Heliothis virescens (Tobacco budworm moth), this protein is Paralytic peptide 1.